The sequence spans 528 residues: Major facilitator-type transporter psiT2 (528 aa).

A disordered region spans residues 1 to 20 (MSPERSASLEPDEHSSLLSD). The next 5 helical transmembrane spans lie at 87–107 (FYSG…IFML), 125–145 (LGVA…MMLV), 148–168 (VCAG…SELT), 174–194 (ALVV…GPLI), and 220–240 (FLPS…GYFF). Low complexity predominate over residues 260–270 (STSSISSRTST). The disordered stretch occupies residues 260 to 299 (STSSISSRTSTLYGATDDHNRDASESTALSPEEAEDEIDS). Helical transmembrane passes span 322-342 (FLMF…FTAV), 357-377 (AFSV…PWVL), 388-408 (FCMF…PLAQ), 424-444 (GLLY…VMAF), 460-479 (LATA…ALCP), and 493-513 (NILG…AGVW).

Belongs to the major facilitator superfamily. TCR/Tet family.

It localises to the membrane. Functionally, major facilitator-type transporter; part of the gene cluster that mediates the biosynthesis of psilocybin, a psychotropic tryptamine-derived natural product. This chain is Major facilitator-type transporter psiT2, found in Psilocybe cyanescens.